The chain runs to 2365 residues: MEEVPGDALCEHFEANILTQNRCQNCFHPEEAHGARYQELRSPSGAEVPYCDLPRCPPAPEDPLSASTSGCQSVVDPGLRPGPKRGPSPSAGLPEEGPTAAPRSRSRELEAVPYLEGLTTSLCGSCNEDPGSDPTSSPDSATPDDTSNSSSVDWDTVERQEEEAPSWDELAVMIPRRPREGPRADSSQRAPSLLTRSPVGGDAAGQKKEDTGGGGRSAGQHWARLRGESGLSLERHRSTLTQASSMTPHSGPRSTTSQASPAQRDTAQAASTREIPRASSPHRITQRDTSRASSTQQEISRASSTQQETSRASSTQEDTPRASSTQEDTPRASSTQWNTPRASSPSRSTQLDNPRTSSTQQDNPQTSFPTCTPQRENPRTPCVQQDDPRASSPNRTTQRENSRTSCAQRDNPKASRTSSPNRATRDNPRTSCAQRDNPRASSPSRATRDNPTTSCAQRDNPRASRTSSPNRATRDNPRTSCAQRDNPRASSPSRATRDNPTTSCAQRDNPRASRTSSPNRATRDNPRTSCAQRDNPRASSPNRAARDNPTTSCAQRDNPRASRTSSPNRATRDNPRTSCAQRDNPRASSPNRATRDNPTTSCAQRDNPRASRTSSPNRATRDNPRTSCAQRDNPRASSPNRTTQQDSPRTSCARRDDPRASSPNRTIQQENPRTSCALRDNPRASSPSRTIQQENPRTSCAQRDDPRASSPNRTTQQENPRTSCARRDNPRASSRNRTIQRDNPRTSCAQRDNPRASSPNRTIQQENLRTSCTRQDNPRTSSPNRATRDNPRTSCAQRDNLRASSPIRATQQDNPRTCIQQNIPRSSSTQQDNPKTSCTKRDNLRPTCTQRDRTQSFSFQRDNPGTSSSQCCTQKENLRPSSPHRSTQWNNPRNSSPHRTNKDIPWASFPLRPTQSDGPRTSSPSRSKQSEVPWASIALRPTQGDRPQTSSPSRPAQHDPPQSSFGPTQYNLPSRATSSSHNPGHQSTSRTSSPVYPAAYGAPLTSPEPSQPPCAVCIGHRDAPRASSPPRYLQHDPFPFFPEPRAPESEPPHHEPPYIPPAVCIGHRDAPRASSPPRHTQFDPFPFLPDTSDAEHQCQSPQHEPLQLPAPVCIGYRDAPRASSPPRQAPEPSLLFQDLPRASTESLVPSMDSLHECPHIPTPVCIGHRDAPSFSSPPRQAPEPSLFFQDPPGTSMESLAPSTDSLHGSPVLIPQVCIGHRDAPRASSPPRHPPSDLAFLAPSPSPGSSGGSRGSAPPGETRHNLEREEYTVLADLPPPRRLAQRQPGPQAQCSSGGRTHSPGRAEVERLFGQERRKSEAAGAFQAQDEGRSQQPSQGQSQLLRRQSSPAPSRQVTMLPAKQAELTRRSQAEPPHPWSPEKRPEGDRQLQGSPLPPRTSARTPERELRTQRPLESGQAGPRQPLGVWQSQEEPPGSQGPHRHLERSWSSQEGGLGPGGWWGCGEPSLGAAKAPEGAWGGTSREYKESWGQPEAWEEKPTHELPRELGKRSPLTSPPENWGGPAESSQSWHSGTPTAVGWGAEGACPYPRGSERRPELDWRDLLGLLRAPGEGVWARVPSLDWEGLLELLQARLPRKDPAGHRDDLARALGPELGPPGTNDVPEQESHSQPEGWAEATPVNGHSPALQSQSPVQLPSPACTSTQWPKIKVTRGPATATLAGLEQTGPLGSRSTAKGPSLPELQFQPEEPEESEPSRGQDPLTDQKQADSADKRPAEGKAGSPLKGRLVTSWRMPGDRPTLFNPFLLSLGVLRWRRPDLLNFKKGWMSILDEPGEPPSPSLTTTSTSQWKKHWFVLTDSSLKYYRDSTAEEADELDGEIDLRSCTDVTEYAVQRNYGFQIHTKDAVYTLSAMTSGIRRNWIEALRKTVRPTSAPDVTKLSDSNKENALHSYSTQKGPLKAGEQRAGSEVISRGGPRKADGQRQALDYVELSPLTQASPQRARTPARTPDRLAKQEELERDLAQRSEERRKWFEATDSRTPEVPAGEGPRRGLGAPLTEDQQNRLSEEIEKKWQELEKLPLRENKRVPLTALLNQSRGERRGPPSDGHEALEKEVQALRAQLEAWRLQGEAPQSALRSQEDGHIPPGYISQEACERSLAEMESSHQQVMEELQRHHERELQRLQQEKEWLLAEETAATASAIEAMKKAYQEELSRELSKTRSLQQGPDGLRKQHQSDVEALKRELQVLSEQYSQKCLEIGALMRQAEEREHTLRRCQQEGQELLRHNQELHGRLSEEIDQLRGFIASQGMGNGCGRSNERSSCELEVLLRVKENELQYLKKEVQCLRDELQMMQKDKRFTSGKYQDVYVELSHIKTRSEREIEQLKEHLRLAMAALQEKESMRNSLAE.

4 disordered regions span residues 48–1106 (VPYC…HEPL), 1168–1554 (HRDA…SERR), 1593–1667 (LPRK…WPKI), and 1679–1751 (AGLE…TSWR). The span at 132 to 151 (SDPTSSPDSATPDDTSNSSS) shows a compositional bias: low complexity. H221 is subject to Phosphothreonine. Composition is skewed to polar residues over residues 239-271 (TLTQASSMTPHSGPRSTTSQASPAQRDTAQAAS), 291-375 (RASS…TPQR), 403-422 (RTSCAQRDNPKASRTSSPNR), 429-471 (RTSC…SPNR), 478-520 (RTSC…SPNR), 527-569 (RTSC…SPNR), 576-618 (RTSC…SPNR), 625-650 (RTSCAQRDNPRASSPNRTTQQDSPRT), 661-674 (SSPNRTIQQENPRT), 683-701 (RASSPSRTIQQENPRTSCA), 709-722 (SSPNRTTQQENPRT), 745-785 (RTSC…SPNR), and 807-837 (IRATQQDNPRTCIQQNIPRSSSTQQDNPKTS). Residues 324–348 (STQEDTPRASSTQWNTPRASSPSRS) are essentiel for its aggregation. A Phosphothreonine modification is found at Q457. Over residues 839 to 854 (TKRDNLRPTCTQRDRT) the composition is skewed to basic and acidic residues. Composition is skewed to polar residues over residues 855 to 898 (QSFS…SSPH), 913 to 927 (PTQSDGPRTSSPSRS), and 945 to 994 (DRPQ…TSSP). Residues 1045 to 1056 (RAPESEPPHHEP) show a composition bias toward basic and acidic residues. Residues 1195-1206 (SMESLAPSTDSL) show a composition bias toward polar residues. 2 stretches are compositionally biased toward basic and acidic residues: residues 1260 to 1270 (ETRHNLEREEY) and 1303 to 1319 (GRAEVERLFGQERRKSE). The span at 1332–1349 (SQQPSQGQSQLLRRQSSP) shows a compositional bias: low complexity. Basic and acidic residues-rich tracts occupy residues 1378–1387 (SPEKRPEGDR) and 1402–1411 (TPERELRTQR). The segment covering 1452–1461 (GGLGPGGWWG) has biased composition (gly residues). The segment covering 1494-1508 (WEEKPTHELPRELGK) has biased composition (basic and acidic residues). Over residues 1524–1534 (ESSQSWHSGTP) the composition is skewed to polar residues. Residues 1594–1606 (PRKDPAGHRDDLA) are compositionally biased toward basic and acidic residues. Residues 1645–1664 (ALQSQSPVQLPSPACTSTQW) show a composition bias toward polar residues. Residues 1696 to 1705 (PSLPELQFQP) are compositionally biased toward low complexity. Over residues 1724–1735 (KQADSADKRPAE) the composition is skewed to basic and acidic residues. A PH domain is found at 1778–1887 (LNFKKGWMSI…WIEALRKTVR (110 aa)). S1796 is subject to Phosphoserine. Disordered stretches follow at residues 1889–2017 (TSAP…LTED) and 2174–2194 (LSKTRSLQQGPDGLRKQHQSD). R1930 carries the post-translational modification Omega-N-methylarginine. Phosphoserine is present on residues S1949 and S1955. The span at 1965 to 1997 (TPDRLAKQEELERDLAQRSEERRKWFEATDSRT) shows a compositional bias: basic and acidic residues. 2 coiled-coil regions span residues 2062 to 2247 (SDGH…NQEL) and 2281 to 2361 (ELEV…SMRN).

As to quaternary structure, isoform 1 forms aggregates. Isoform 1 binds to TRIO and F-actin. Isoform 1 may also interact with myosin II. Interacts with HECTD3. Interacts with PJVK. Interacts with TERF1; mediates TERF1 localization to the centrosome. In terms of processing, ubiquitinated by HECTD3, leading to its degradation by the proteasome. Post-translationally, phosphorylation at Thr-457 by PLK1 ensures mitotic progression and is essential for accurate chromosome segregation. Phosphorylation at residues Thr-221 and Thr-457 by kinase NEK2A and PLK1 coordinates TERF1 translocation from telomere to spindle pole. Widely expressed. Highly expressed in heart and placenta. In terms of tissue distribution, expressed in fetal brain, retina and cochlea but is not detectable in the other tissues.

Its subcellular location is the nucleus. It localises to the cytoplasm. The protein localises to the cytoskeleton. It is found in the microtubule organizing center. The protein resides in the centrosome. Its subcellular location is the midbody. It localises to the chromosome. The protein localises to the telomere. Functionally, regulates actin cytoskeletal organization, cell spreading and cell contraction by directly binding and stabilizing filamentous F-actin and prevents its depolymerization. May also serve as a linker protein to recruit proteins required for F-actin formation and turnover. Essential for correct mitotic progression. In terms of biological role, plays a pivotal role in the formation of stereocilia rootlets. This is TRIO and F-actin-binding protein (TRIOBP) from Homo sapiens (Human).